A 349-amino-acid chain; its full sequence is Bifunctional nitrilase/nitrile hydratase NIT4A (349 aa).

Positions 29 to 301 (VRATVVQAST…EALISADLDL (273 aa)) constitute a CN hydrolase domain. Catalysis depends on E69, which acts as the Proton acceptor. The active-site Proton donor is K156. Catalysis depends on C190, which acts as the Nucleophile.

This sequence belongs to the carbon-nitrogen hydrolase superfamily. Nitrilase family. Expressed in roots, stems, cotyledons, leaves and flowers.

Its subcellular location is the cell membrane. It carries out the reaction a nitrile + 2 H2O = a carboxylate + NH4(+). The catalysed reaction is 3-cyano-L-alanine + 2 H2O = L-aspartate + NH4(+). The enzyme catalyses L-asparagine = 3-cyano-L-alanine + H2O. Functionally, highly specific for beta-cyano-L-alanine (Ala(CN)). Low activity with 3-phenylpropionitrile (PPN). Not associated with auxin production but may be involved in cyanide detoxification. The chain is Bifunctional nitrilase/nitrile hydratase NIT4A (NIT4A) from Nicotiana tabacum (Common tobacco).